The following is a 146-amino-acid chain: Mite group 2 allergen Der f 2 (146 aa).

The first 17 residues, M1–A17, serve as a signal peptide directing secretion. Cystine bridges form between C25–C136, C38–C44, and C90–C95.

It belongs to the NPC2 family.

It is found in the secreted. This is Mite group 2 allergen Der f 2 (DERF2) from Dermatophagoides farinae (American house dust mite).